The sequence spans 109 residues: Small ribosomal subunit protein bS16 (109 aa).

Residues 87–109 (ALRETPKKSAPKAKAQERAKAAG) form a disordered region. Positions 100 to 109 (KAQERAKAAG) are enriched in basic and acidic residues.

The protein belongs to the bacterial ribosomal protein bS16 family.

This is Small ribosomal subunit protein bS16 from Rhodospirillum centenum (strain ATCC 51521 / SW).